The primary structure comprises 253 residues: Ubiquinone biosynthesis O-methyltransferase (253 aa).

Residues R47, G78, D99, and M141 each coordinate S-adenosyl-L-methionine.

The protein belongs to the methyltransferase superfamily. UbiG/COQ3 family.

It catalyses the reaction a 3-demethylubiquinol + S-adenosyl-L-methionine = a ubiquinol + S-adenosyl-L-homocysteine + H(+). The enzyme catalyses a 3-(all-trans-polyprenyl)benzene-1,2-diol + S-adenosyl-L-methionine = a 2-methoxy-6-(all-trans-polyprenyl)phenol + S-adenosyl-L-homocysteine + H(+). The protein operates within cofactor biosynthesis; ubiquinone biosynthesis. Its function is as follows. O-methyltransferase that catalyzes the 2 O-methylation steps in the ubiquinone biosynthetic pathway. This is Ubiquinone biosynthesis O-methyltransferase from Bradyrhizobium sp. (strain ORS 278).